The primary structure comprises 244 residues: Putative lipoprotein LprA (244 aa).

The first 24 residues, 1–24 (MKHPPCSVVAAATAILAVVLAIGG), serve as a signal peptide directing secretion. Cysteine 25 carries N-palmitoyl cysteine lipidation. Cysteine 25 carries the S-diacylglycerol cysteine lipid modification.

This sequence belongs to the LppX/LprAFG lipoprotein family.

The protein localises to the cell membrane. The protein is Putative lipoprotein LprA (lprA) of Mycobacterium tuberculosis (strain CDC 1551 / Oshkosh).